The following is a 112-amino-acid chain: uncharacterized protein (112 aa).

Residues 1–21 form the signal peptide; that stretch reads MKTLFTSVVLCGALVVSSSFA. HhH domains are found at residues 49–79 and 80–109; these read DKLN…IVQY and REKH…NRDR.

This is an uncharacterized protein from Haemophilus influenzae (strain ATCC 51907 / DSM 11121 / KW20 / Rd).